Consider the following 370-residue polypeptide: N-acetyldiaminopimelate deacetylase (370 aa).

Residue Asp-67 is part of the active site. Residue Glu-126 is the Proton acceptor of the active site.

Belongs to the peptidase M20A family. N-acetyldiaminopimelate deacetylase subfamily.

It carries out the reaction N-acetyl-(2S,6S)-2,6-diaminopimelate + H2O = (2S,6S)-2,6-diaminopimelate + acetate. Its pathway is amino-acid biosynthesis; L-lysine biosynthesis via DAP pathway; LL-2,6-diaminopimelate from (S)-tetrahydrodipicolinate (acetylase route): step 3/3. Its function is as follows. Catalyzes the conversion of N-acetyl-diaminopimelate to diaminopimelate and acetate. The chain is N-acetyldiaminopimelate deacetylase from Exiguobacterium sibiricum (strain DSM 17290 / CCUG 55495 / CIP 109462 / JCM 13490 / 255-15).